We begin with the raw amino-acid sequence, 187 residues long: Calcium and integrin-binding family member 2 (187 aa).

EF-hand domains lie at 66–101 (RENP…LCES), 103–138 (PREL…LTKS), and 144–179 (EVVL…APDF). 9 residues coordinate Ca(2+): D116, N118, D120, D127, D157, D159, D161, K163, and D168.

In terms of assembly, monomer. Homodimer. Interacts with WHRN and MYO7A. Interacts with ITGA2B (via C-terminus cytoplasmic tail region); the interactions are stabilized/increased in a calcium and magnesium-dependent manner. Interacts with ITGA7 (via C-terminus cytoplasmic tail region); the interactions are stabilized/increased in a calcium and magnesium-dependent manner. Interacts with TMC1. Interacts with TMC2. Widely expressed.

The protein localises to the cytoplasm. Its subcellular location is the cell projection. It localises to the stereocilium. It is found in the photoreceptor inner segment. The protein resides in the cilium. The protein localises to the photoreceptor outer segment. Its subcellular location is the cell membrane. It localises to the sarcolemma. Calcium- and integrin-binding protein that plays a role in intracellular calcium homeostasis. Acts as an auxiliary subunit of the sensory mechanoelectrical transduction (MET) channel in hair cells. Essential for mechanoelectrical transduction (MET) currents in auditory hair cells and thereby required for hearing. Regulates the function of hair cell mechanotransduction by controlling the distribution of transmembrane channel-like proteins TMC1 and TMC2, and by regulating the function of the MET channels in hair cells. Required for the maintenance of auditory hair cell stereocilia bundle morphology and function and for hair-cell survival in the cochlea. Critical for proper photoreceptor cell maintenance and function. Plays a role in intracellular calcium homeostasis by decreasing ATP-induced calcium release. The polypeptide is Calcium and integrin-binding family member 2 (CIB2) (Homo sapiens (Human)).